Consider the following 89-residue polypeptide: Small ribosomal subunit protein uS17 (89 aa).

This sequence belongs to the universal ribosomal protein uS17 family. In terms of assembly, part of the 30S ribosomal subunit.

Functionally, one of the primary rRNA binding proteins, it binds specifically to the 5'-end of 16S ribosomal RNA. The chain is Small ribosomal subunit protein uS17 from Leptospira borgpetersenii serovar Hardjo-bovis (strain JB197).